Reading from the N-terminus, the 401-residue chain is Ninja-family protein MODD (401 aa).

2 disordered regions span residues 95-135 and 215-238; these read KQGV…GEGR and TGNKKTGGNVNHSSDRNRCTGLPP. Over residues 105-130 the composition is skewed to low complexity; sequence RPSGGAEAEPAAARLPASGSPSSGSS. Residues 217 to 226 are compositionally biased toward polar residues; sequence NKKTGGNVNH.

It belongs to the Ninja family. Interacts with BZIP46, TPR3 and PUB70.

The protein resides in the nucleus. Acts as a negative regulator of abscisic acid (ABA) signaling and drought tolerance. Mediates deactivation and degradation of BZIP46, a positive regulator of ABA signaling and drought stress tolerance. Represses BZIP46 activity via interaction with the TPR3-HDAC1 corepressor complex and down-regulation of the histone acetylation level at BZIP46 target genes. Promotes BZIP46 degradation via interaction with the U-box type ubiquitin E3 ligase PUB70. The sequence is that of Ninja-family protein MODD from Oryza sativa subsp. japonica (Rice).